Here is a 456-residue protein sequence, read N- to C-terminus: Alcohol acyltransferase 1 (456 aa).

Catalysis depends on proton acceptor residues histidine 166 and aspartate 382.

The protein belongs to the plant acyltransferase family. Expressed in fruit.

The catalysed reaction is 3-(methylsulfanyl)propanoyl-CoA + butan-1-ol = butyl 3-(methylsulfanyl)propanoate + CoA. It carries out the reaction ethanol + benzoyl-CoA = ethyl benzoate + CoA. It catalyses the reaction butan-1-ol + benzoyl-CoA = butyl benzoate + CoA. The enzyme catalyses 2-(methylsulfanyl)acetyl-CoA + butan-1-ol = butyl 2-(methylsulfanyl)acetate + CoA. In terms of biological role, involved in the biosynthesis of volatile esters which confer kiwifruit flavor. Alcohol acyl transferase that can use a wide range of alcohols as substrate to produce esters. Exhibits benzoyl-CoA:alcohol O-acyltransferase activity. The chain is Alcohol acyltransferase 1 from Actinidia deliciosa (Kiwi).